A 363-amino-acid polypeptide reads, in one-letter code: Protein LEG1 homolog (363 aa).

A signal peptide spans 1 to 19 (MQCVWTLSLLQLVALWANA). N-linked (GlcNAc...) asparagine glycans are attached at residues asparagine 79, asparagine 261, and asparagine 292.

This sequence belongs to the LEG1 family.

Its subcellular location is the secreted. May be involved in early liver development. This Oncorhynchus mykiss (Rainbow trout) protein is Protein LEG1 homolog.